The primary structure comprises 36 residues: Dolichyl-diphosphooligosaccharide--protein glycosyltransferase subunit 2 (36 aa).

Belongs to the SWP1 family. Component of the oligosaccharyltransferase (OST) complex.

The protein resides in the endoplasmic reticulum. It localises to the endoplasmic reticulum membrane. The protein operates within protein modification; protein glycosylation. Subunit of the oligosaccharyl transferase (OST) complex that catalyzes the initial transfer of a defined glycan (Glc(3)Man(9)GlcNAc(2) in eukaryotes) from the lipid carrier dolichol-pyrophosphate to an asparagine residue within an Asn-X-Ser/Thr consensus motif in nascent polypeptide chains, the first step in protein N-glycosylation. N-glycosylation occurs cotranslationally and the complex associates with the Sec61 complex at the channel-forming translocon complex that mediates protein translocation across the endoplasmic reticulum (ER). All subunits are required for a maximal enzyme activity. The polypeptide is Dolichyl-diphosphooligosaccharide--protein glycosyltransferase subunit 2 (Gallus gallus (Chicken)).